The following is a 93-amino-acid chain: YcgL domain-containing protein Shal_1837 (93 aa).

The YcgL domain maps to 1–85; sequence MICAVYKSRR…PVVNLLEQHK (85 aa).

This chain is YcgL domain-containing protein Shal_1837, found in Shewanella halifaxensis (strain HAW-EB4).